A 195-amino-acid polypeptide reads, in one-letter code: Coiled-coil domain-containing protein 184 (195 aa).

Positions 39–68 (GMKELMEHLKAQLQALFEDVRAMRGALDEQ) form a coiled coil. The segment at 98-175 (RQGGLGVVGN…AGLLGGDGPL (78 aa)) is disordered. Positions 135-146 (PEDEEDDDEEEK) are enriched in acidic residues.

The polypeptide is Coiled-coil domain-containing protein 184 (CCDC184) (Bos taurus (Bovine)).